The chain runs to 268 residues: Tropinone reductase homolog (268 aa).

NADP(+) is bound at residue 21–45 (LVTGGTRGIGYAIVEELANFGAEVY). Ser-154 lines the substrate pocket. Tyr-167 functions as the Proton acceptor in the catalytic mechanism.

The protein belongs to the short-chain dehydrogenases/reductases (SDR) family.

The chain is Tropinone reductase homolog from Datura stramonium (Jimsonweed).